The sequence spans 337 residues: Putative NAC domain-containing protein 94 (337 aa).

The NAC domain occupies 20–191; sequence VLPGFRFHPT…AWAICRIFKK (172 aa).

It localises to the nucleus. The sequence is that of Putative NAC domain-containing protein 94 (ANAC094) from Arabidopsis thaliana (Mouse-ear cress).